We begin with the raw amino-acid sequence, 528 residues long: DEAD-box ATP-dependent RNA helicase CshA (528 aa).

The short motif at 2–30 (TTFRELGLSDSLLQSVESMGFEEATPIQA) is the Q motif element. One can recognise a Helicase ATP-binding domain in the interval 33–203 (IPHALQGKDI…ERFMTEPQHI (171 aa)). Position 46–53 (46–53 (AQTGTGKT)) interacts with ATP. A DEAD box motif is present at residues 151–154 (DEAD). The Helicase C-terminal domain occupies 214–374 (NIQQFYLEVQ…RMDAPTLDEA (161 aa)). Residues 428 to 528 (TTPIALTSEP…RKHHSRKPQA (101 aa)) are disordered. Residues 458–506 (DGNRNRSRDGRGGDGRNRDRNRDGRNRDGNRDRNREGSRDGNRGRRGEG) show a composition bias toward basic and acidic residues. A compositionally biased stretch (basic residues) spans 518-528 (ERKHHSRKPQA).

This sequence belongs to the DEAD box helicase family. CshA subfamily. Oligomerizes, may be a member of the RNA degradosome.

The protein localises to the cytoplasm. It catalyses the reaction ATP + H2O = ADP + phosphate + H(+). In terms of biological role, DEAD-box RNA helicase possibly involved in RNA degradation. Unwinds dsRNA in both 5'- and 3'-directions, has RNA-dependent ATPase activity. The sequence is that of DEAD-box ATP-dependent RNA helicase CshA from Bacillus thuringiensis (strain Al Hakam).